The following is a 33-amino-acid chain: Cytochrome b6-f complex subunit 8 (33 aa).

A helical transmembrane segment spans residues 2–22; sequence LFTLAWASLAAVFSFSIAMVV.

Belongs to the PetN family. In terms of assembly, the 4 large subunits of the cytochrome b6-f complex are cytochrome b6, subunit IV (17 kDa polypeptide, PetD), cytochrome f and the Rieske protein, while the 4 small subunits are PetG, PetL, PetM and PetN. The complex functions as a dimer.

The protein localises to the cellular thylakoid membrane. Its function is as follows. Component of the cytochrome b6-f complex, which mediates electron transfer between photosystem II (PSII) and photosystem I (PSI), cyclic electron flow around PSI, and state transitions. In Synechococcus sp. (strain WH7803), this protein is Cytochrome b6-f complex subunit 8.